Reading from the N-terminus, the 4885-residue chain is Centrosome-associated protein CEP530 (4885 aa).

Residues 1437-1528 (VAEYEAETRG…GREKDQLRSE (92 aa)) adopt a coiled-coil conformation.

It localises to the cytoplasm. The protein resides in the cytoskeleton. The protein localises to the microtubule organizing center. Its subcellular location is the centrosome. Required for proper nuclei segregation during the cell division. Plays a role in coordination of karyokinesis and cytokinesis during the tachyzoite cell cycle. This Toxoplasma gondii (strain ATCC 50611 / Me49) protein is Centrosome-associated protein CEP530.